Reading from the N-terminus, the 136-residue chain is Photosystem II extrinsic protein U (136 aa).

The signal sequence occupies residues 1-28; the sequence is MKQLAQRLFSLALVLALVLGISVQSAQA.

It belongs to the PsbU family. As to quaternary structure, PSII is composed of 1 copy each of membrane proteins PsbA, PsbB, PsbC, PsbD, PsbE, PsbF, PsbH, PsbI, PsbJ, PsbK, PsbL, PsbM, PsbT, PsbX, PsbY, PsbZ, Psb30/Ycf12, peripheral proteins PsbO, CyanoQ (PsbQ), PsbU, PsbV and a large number of cofactors. It forms dimeric complexes.

The protein localises to the cellular thylakoid membrane. In terms of biological role, one of the extrinsic, lumenal subunits of photosystem II (PSII). PSII is a light-driven water plastoquinone oxidoreductase, using light energy to abstract electrons from H(2)O, generating a proton gradient subsequently used for ATP formation. The extrinsic proteins stabilize the structure of photosystem II oxygen-evolving complex (OEC), the ion environment of oxygen evolution and protect the OEC against heat-induced inactivation. The protein is Photosystem II extrinsic protein U of Synechococcus elongatus (strain ATCC 33912 / PCC 7942 / FACHB-805) (Anacystis nidulans R2).